We begin with the raw amino-acid sequence, 156 residues long: Glutaredoxin-2, mitochondrial (156 aa).

The N-terminal 19 residues, 1–19 (MSWRRAASVGRRLVASGRI), are a transit peptide targeting the mitochondrion. One can recognise a Glutaredoxin domain in the interval 50–150 (VNQIQETISN…PLVHQCYLKK (101 aa)). [2Fe-2S] cluster is bound at residue Cys-61. Lys-67 provides a ligand contact to glutathione. The residue at position 70 (Cys-70) is an S-glutathionyl cysteine; alternate. Cys-70 and Cys-73 are oxidised to a cystine. 2 residues coordinate glutathione: Gln-102 and Val-114. [2Fe-2S] cluster is bound at residue Cys-146.

The protein belongs to the glutaredoxin family. As to quaternary structure, monomer; active form. Homodimer; inactive form. The homodimer is probably linked by 1 2Fe-2S cluster. Widely expressed. Highly expressed in testis, and at much lower level in kidney and brain.

The protein resides in the mitochondrion. The protein localises to the nucleus. The 2Fe-2S present in the homodimer leads to inactivation of the enzyme. The 2Fe-2S may serve as a redox sensor: the presence of one-electron oxidants or reductants leading to the loss of the 2Fe-2S cluster, subsequent monomerization and activation of the enzyme. In terms of biological role, glutathione-dependent oxidoreductase that facilitates the maintenance of mitochondrial redox homeostasis upon induction of apoptosis by oxidative stress. Involved in response to hydrogen peroxide and regulation of apoptosis caused by oxidative stress. Acts as a very efficient catalyst of monothiol reactions because of its high affinity for protein glutathione-mixed disulfides. Can receive electrons not only from glutathione (GSH), but also from thioredoxin reductase supporting both monothiol and dithiol reactions. Efficiently catalyzes both glutathionylation and deglutathionylation of mitochondrial complex I, which in turn regulates the superoxide production by the complex. Overexpression decreases the susceptibility to apoptosis and prevents loss of cardiolipin and cytochrome c release. The sequence is that of Glutaredoxin-2, mitochondrial (Glrx2) from Mus musculus (Mouse).